A 474-amino-acid polypeptide reads, in one-letter code: Cysteine protease ATG4A (474 aa).

Residues 1–32 are disordered; the sequence is MTSLPGRGVSPSSSDPLCEGNAAPSSSSSSGQ. Residue C161 is the Nucleophile of the active site. Residues D358 and H360 contribute to the active site. Positions 439-449 are enriched in polar residues; that stretch reads KQMYNEESSSG. The disordered stretch occupies residues 439-474; that stretch reads KQMYNEESSSGDGMDSINVEGLDGSGETGEEEWQIL.

Belongs to the peptidase C54 family. Interacts with ATG8.

Its subcellular location is the cytoplasm. It catalyses the reaction [protein]-C-terminal L-amino acid-glycyl-phosphatidylethanolamide + H2O = [protein]-C-terminal L-amino acid-glycine + a 1,2-diacyl-sn-glycero-3-phosphoethanolamine. Functionally, cysteine protease that plays a key role in autophagy by mediating both proteolytic activation and delipidation of ATG8 family proteins. The protease activity is required for proteolytic activation of ATG8 family proteins: cleaves the C-terminal amino acid of ATG8 proteins to reveal a C-terminal glycine. Exposure of the glycine at the C-terminus is essential for ATG8 proteins conjugation to phosphatidylethanolamine (PE) and insertion to membranes, which is necessary for autophagy. In addition to the protease activity, also mediates delipidation of PE-conjugated ATG8 proteins. The sequence is that of Cysteine protease ATG4A (ATG4A) from Oryza sativa subsp. japonica (Rice).